The chain runs to 518 residues: Sensor protein kinase HptS (518 aa).

2 consecutive transmembrane segments (helical) span residues 20–40 (IFPVFLVIIIGLVSFYAIYIW) and 222–242 (GITLLIVMAVVLVLLVIFGFI). Positions 297–513 (EQLIHSIEHT…LICYKIPLSR (217 aa)) constitute a Histidine kinase domain. Residue histidine 325 is modified to Phosphohistidine; by autocatalysis.

Post-translationally, autophosphorylated.

It is found in the cell membrane. It catalyses the reaction ATP + protein L-histidine = ADP + protein N-phospho-L-histidine.. Member of the two-component regulatory system HptS/HptR that regulates genes involved in hexose phosphate transport system in response to changes in extracellular phosphate sources. May act as a sensor protein kinase which is autophosphorylated at a histidine residue and transfers its phosphate group to the conserved aspartic acid residue in the regulatory domain of HptS. In turn, HptS antagonizes CcpA-dependent transcription of a subset of CcpA-regulated genes involved in antibiotic susceptibility. This is Sensor protein kinase HptS (hptS) from Staphylococcus aureus (strain bovine RF122 / ET3-1).